We begin with the raw amino-acid sequence, 147 residues long: Basic phospholipase A2 beta-bungarotoxin A4 chain (147 aa).

An N-terminal signal peptide occupies residues 1–19; that stretch reads MNPAHLLVLSAVCVSLLGA. A propeptide spanning residues 20–27 is cleaved from the precursor; sequence ANIPPHPL. 6 cysteine pairs are disulfide-bonded: Cys54/Cys146, Cys56/Cys72, Cys71/Cys127, Cys78/Cys120, Cys88/Cys113, and Cys106/Cys118. 3 residues coordinate Ca(2+): Tyr55, Gly57, and Gly59. The active site involves His75. Ca(2+) is bound at residue Asp76. The active site involves Asp121.

It belongs to the phospholipase A2 family. Group I subfamily. D49 sub-subfamily. As to quaternary structure, heterodimer; disulfide-linked. The A chain has phospholipase A2 activity and the B chain shows homology with the basic protease inhibitors. Ca(2+) serves as cofactor. As to expression, expressed by the venom gland.

It localises to the secreted. The enzyme catalyses a 1,2-diacyl-sn-glycero-3-phosphocholine + H2O = a 1-acyl-sn-glycero-3-phosphocholine + a fatty acid + H(+). Its function is as follows. Snake venom phospholipase A2 (PLA2) that shows presynaptic neurotoxicity. The A chain has phospholipase activity. PLA2 catalyzes the calcium-dependent hydrolysis of the 2-acyl groups in 3-sn-phosphoglycerides. The sequence is that of Basic phospholipase A2 beta-bungarotoxin A4 chain from Bungarus candidus (Malayan krait).